The following is a 669-amino-acid chain: DNA ligase (669 aa).

NAD(+) contacts are provided by residues 33–37 (DAEYD), 82–83 (SL), and Glu-114. The active-site N6-AMP-lysine intermediate is the Lys-116. NAD(+)-binding residues include Arg-137, Glu-174, Lys-291, and Lys-315. Positions 409, 412, 427, and 433 each coordinate Zn(2+). The BRCT domain occupies 593-669 (EIPQPLAGKV…QTEQDLLALL (77 aa)).

It belongs to the NAD-dependent DNA ligase family. LigA subfamily. It depends on Mg(2+) as a cofactor. Mn(2+) serves as cofactor.

It catalyses the reaction NAD(+) + (deoxyribonucleotide)n-3'-hydroxyl + 5'-phospho-(deoxyribonucleotide)m = (deoxyribonucleotide)n+m + AMP + beta-nicotinamide D-nucleotide.. Functionally, DNA ligase that catalyzes the formation of phosphodiester linkages between 5'-phosphoryl and 3'-hydroxyl groups in double-stranded DNA using NAD as a coenzyme and as the energy source for the reaction. It is essential for DNA replication and repair of damaged DNA. The protein is DNA ligase of Vibrio vulnificus (strain YJ016).